We begin with the raw amino-acid sequence, 154 residues long: NADPH-dependent 7-cyano-7-deazaguanine reductase (154 aa).

The span at Met-1–Ser-21 shows a compositional bias: polar residues. A disordered region spans residues Met-1–Val-26. The active-site Thioimide intermediate is Cys-52. Asp-59 (proton donor) is an active-site residue. Residues Val-74 to Ser-76 and His-93 to Glu-94 contribute to the substrate site.

The protein belongs to the GTP cyclohydrolase I family. QueF type 1 subfamily.

It localises to the cytoplasm. The catalysed reaction is 7-aminomethyl-7-carbaguanine + 2 NADP(+) = 7-cyano-7-deazaguanine + 2 NADPH + 3 H(+). Its pathway is tRNA modification; tRNA-queuosine biosynthesis. Functionally, catalyzes the NADPH-dependent reduction of 7-cyano-7-deazaguanine (preQ0) to 7-aminomethyl-7-deazaguanine (preQ1). The chain is NADPH-dependent 7-cyano-7-deazaguanine reductase from Rhizobium etli (strain ATCC 51251 / DSM 11541 / JCM 21823 / NBRC 15573 / CFN 42).